The sequence spans 63 residues: Arabinogalactan peptide 3 (63 aa).

A signal peptide spans 1–26 (MASRILYAAAVVAAVAVSSLAGVAYA). Serine 36 carries the GPI-anchor amidated serine lipid modification. The propeptide at 37-63 (GAAAVSSSLVAAVLCPAVALLLGNLRQ) is removed in mature form.

It belongs to the AG-peptide AGP family. In terms of processing, O-glycosylated on hydroxyprolines; noncontiguous hydroxylproline residues are glycosylated with arabinogalactan. In terms of tissue distribution, expressed in roots, stems, leaves, flowers and seeds.

The protein localises to the vacuole. It localises to the aleurone grain membrane. In terms of biological role, proteoglycan that seems to be implicated in diverse developmental roles such as differentiation, cell-cell recognition, embryogenesis and programmed cell death. The protein is Arabinogalactan peptide 3 (AGPEP3) of Oryza sativa subsp. japonica (Rice).